Consider the following 253-residue polypeptide: Zinc finger protein GIS (253 aa).

Positions 1 to 10 are enriched in acidic residues; sequence MDEATGETET. The disordered stretch occupies residues 1–85; the sequence is MDEATGETET…GDNSTDNNSI (85 aa). Polar residues-rich tracts occupy residues 11 to 21, 49 to 63, and 76 to 85; these read QDFMNVESFSQ, SITT…PYQT, and GDNSTDNNSI. A C2H2-type zinc finger spans residues 91 to 113; it reads FECHYCFRNFPTSQALGGHQNAH.

In terms of tissue distribution, expressed in inflorescence meristems, floral meristems and stem epidermis.

Its subcellular location is the nucleus. Functionally, probable transcription factor required for the initiation of inflorescence trichomes in response to gibberellin (GA). Mediates the induction of GL1 expression by GA in inflorescence organs and is antagonized in its action by the DELLA repressor GAI. Acts upstream of the trichome initiation regulators GL1 and GL3, and downstream of the GA signaling repressor SPINDLY (SPY). Does not play a significant role in the cytokinin response. Controls trichome branching through GA signaling. Acts downstream of the key regulator STICHEL (STI) in an endoreduplication-independent pathway. Controls trichome cell division indirectly by acting downstream of a key endoreduplication regulator SIAMESE (SIM). The protein is Zinc finger protein GIS (GIS) of Arabidopsis thaliana (Mouse-ear cress).